Consider the following 311-residue polypeptide: VQ motif-containing protein 9 (311 aa).

The span at 1 to 27 (MDKSCNSSGDSSAVSASATSSTGNNTT) shows a compositional bias: low complexity. Positions 1-78 (MDKSCNSSGD…QINQGNLHQH (78 aa)) are disordered. Positions 90–99 (FRDVVQKLTG) match the VQ motif. 3 disordered regions span residues 103–125 (HERISAPPQQPIHHPKPQQSSRL), 228–266 (QQENAPPSQHNSFPPPHPPPPSSAVSQTVPTSIPAPPLF), and 290–311 (GQLGFPVSPTTVPLPSPKYKGH). Over residues 240–249 (FPPPHPPPPS) the composition is skewed to pro residues. Over residues 290–302 (GQLGFPVSPTTVP) the composition is skewed to low complexity.

Interacts (via N-terminus) with WRKY8. Highly expressed in roots and at lower levels in rosette leaves, cauline leaves, stems, flowers and siliques.

The protein resides in the nucleus. Functionally, functions as a negative regulator of salt stress response. Functions as a repressor of WRKY8 transcription factor by decreasing the DNA-binding activity of WRKY8 and acts antagonistically with WRKY8 to regulate sodium and potassium homeostasis under salt stress. This chain is VQ motif-containing protein 9, found in Arabidopsis thaliana (Mouse-ear cress).